Reading from the N-terminus, the 262-residue chain is uncharacterized protein (262 aa).

A BTB domain is found at 5 to 107 (PLISLDVEGV…MIEHKLRTFC (103 aa)). The CRIB domain occupies 182–195 (ISLPRNFTHIAHVG).

This is an uncharacterized protein from Caenorhabditis elegans.